Consider the following 357-residue polypeptide: Peptide chain release factor 1 (357 aa).

Gln-232 is subject to N5-methylglutamine. A compositionally biased stretch (basic and acidic residues) spans 281 to 305; sequence DRQHNEMAADRRSQVGSGDRSERIR. The segment at 281 to 309 is disordered; that stretch reads DRQHNEMAADRRSQVGSGDRSERIRTYNF.

The protein belongs to the prokaryotic/mitochondrial release factor family. Post-translationally, methylated by PrmC. Methylation increases the termination efficiency of RF1.

The protein localises to the cytoplasm. Functionally, peptide chain release factor 1 directs the termination of translation in response to the peptide chain termination codons UAG and UAA. The polypeptide is Peptide chain release factor 1 (Nitratidesulfovibrio vulgaris (strain DSM 19637 / Miyazaki F) (Desulfovibrio vulgaris)).